Consider the following 124-residue polypeptide: Small ribosomal subunit protein eS25 (124 aa).

A compositionally biased stretch (basic and acidic residues) spans 1–22; it reads MPPKDSKQKKDTSKAKKDKDPV. Residues 1–37 form a disordered region; that stretch reads MPPKDSKQKKDTSKAKKDKDPVNKSGGKAKKKKWSKG. Residues 27–37 show a composition bias toward basic residues; sequence GKAKKKKWSKG.

The protein belongs to the eukaryotic ribosomal protein eS25 family. As to quaternary structure, component of the small ribosomal subunit.

Its subcellular location is the cytoplasm. Its function is as follows. Component of the small ribosomal subunit. The ribosome is a large ribonucleoprotein complex responsible for the synthesis of proteins in the cell. The sequence is that of Small ribosomal subunit protein eS25 (rps25) from Ictalurus punctatus (Channel catfish).